The chain runs to 114 residues: U17-barytoxin-Tl1a (114 aa).

A signal peptide spans 1 to 20 (MKTIIVFLSLLVLATKFGDA). A propeptide spanning residues 21–74 (NEGVNQEQMKEVIQNEFREDFLNEMAAMSLLQQLEAIESTLLEKEADRNSRQKR) is cleaved from the precursor. Disulfide bonds link Cys-75-Cys-88, Cys-82-Cys-93, and Cys-87-Cys-108.

Belongs to the neurotoxin 14 (magi-1) family. 03 (ICK-30-40) subfamily. Expressed by the venom gland.

It localises to the secreted. Functionally, ion channel inhibitor. The chain is U17-barytoxin-Tl1a from Trittame loki (Brush-footed trapdoor spider).